Consider the following 148-residue polypeptide: Large ribosomal subunit protein bL9 (148 aa).

It belongs to the bacterial ribosomal protein bL9 family.

Its function is as follows. Binds to the 23S rRNA. The chain is Large ribosomal subunit protein bL9 from Methylococcus capsulatus (strain ATCC 33009 / NCIMB 11132 / Bath).